The chain runs to 430 residues: Aspartate aminotransferase, mitochondrial (430 aa).

The transit peptide at 1 to 29 directs the protein to the mitochondrion; the sequence is MALLHSGRFLSGVAAAFHPGLAAAASARA. A Phosphothreonine modification is found at T48. K59 is modified (N6-acetyllysine). Substrate is bound at residue G65. Position 73 is an N6-acetyllysine; alternate (K73). K73 carries the N6-succinyllysine; alternate modification. An N6-acetyllysine modification is found at K82. At K90 the chain carries N6-acetyllysine; alternate. Residue K90 is modified to N6-succinyllysine; alternate. Y96 carries the 3'-nitrotyrosine; alternate modification. Phosphotyrosine; alternate is present on Y96. Residues K107 and K122 each carry the N6-acetyllysine; alternate modification. Residues K107 and K122 each carry the N6-succinyllysine; alternate modification. S143 bears the Phosphoserine mark. K159 carries the post-translational modification N6-acetyllysine; alternate. K159 is subject to N6-succinyllysine; alternate. W162 is a substrate binding site. K185 is modified (N6-acetyllysine; alternate). An N6-succinyllysine; alternate modification is found at K185. N215 is a substrate binding site. Position 227 is an N6-succinyllysine (K227). K234 is subject to N6-acetyllysine. An N6-acetyllysine; alternate mark is found at K279 and K296. N6-(pyridoxal phosphate)lysine; alternate is present on K279. An N6-succinyllysine; alternate modification is found at K296. K302 carries the N6-acetyllysine modification. K309 bears the N6-acetyllysine; alternate mark. At K309 the chain carries N6-succinyllysine; alternate. R313 bears the Asymmetric dimethylarginine mark. K338 is modified (N6-acetyllysine; alternate). An N6-succinyllysine; alternate modification is found at K338. K345 is modified (N6-acetyllysine). An N6-acetyllysine; alternate modification is found at K363. K363 carries the post-translational modification N6-succinyllysine; alternate. N6-acetyllysine is present on residues K364 and K387. N6-acetyllysine; alternate is present on residues K396 and K404. 2 positions are modified to N6-succinyllysine; alternate: K396 and K404. A substrate-binding site is contributed by R407.

Belongs to the class-I pyridoxal-phosphate-dependent aminotransferase family. As to quaternary structure, homodimer. Pyridoxal 5'-phosphate serves as cofactor.

Its subcellular location is the mitochondrion matrix. The protein resides in the cell membrane. The enzyme catalyses L-aspartate + 2-oxoglutarate = oxaloacetate + L-glutamate. The catalysed reaction is L-kynurenine + 2-oxoglutarate = 4-(2-aminophenyl)-2,4-dioxobutanoate + L-glutamate. Functionally, catalyzes the irreversible transamination of the L-tryptophan metabolite L-kynurenine to form kynurenic acid (KA). As a member of the malate-aspartate shuttle, it has a key role in the intracellular NAD(H) redox balance. Is important for metabolite exchange between mitochondria and cytosol, and for amino acid metabolism. Facilitates cellular uptake of long-chain free fatty acids. The protein is Aspartate aminotransferase, mitochondrial (GOT2) of Bos taurus (Bovine).